Reading from the N-terminus, the 68-residue chain is Venom-like beta-defensin (68 aa).

The signal sequence occupies residues 1–24 (MRLLILFLAVVTLLSLAGPGSAEV). 3 disulfides stabilise this stretch: Cys33-Cys60, Cys40-Cys54, and Cys47-Cys61.

In terms of tissue distribution, highly expressed in intestine, liver and spleen and expressed at lower levels in brain, kidney, lung, testis and venom gland.

It localises to the secreted. Its function is as follows. Potent antimicrobial peptide that displays activity against S.aureus and P.aeruginosa. Does not inhibit growth of E.coli. This is Venom-like beta-defensin from Ornithorhynchus anatinus (Duckbill platypus).